Consider the following 143-residue polypeptide: Large ribosomal subunit protein uL13 (143 aa).

It belongs to the universal ribosomal protein uL13 family. Part of the 50S ribosomal subunit.

Its function is as follows. This protein is one of the early assembly proteins of the 50S ribosomal subunit, although it is not seen to bind rRNA by itself. It is important during the early stages of 50S assembly. In Prochlorococcus marinus (strain MIT 9312), this protein is Large ribosomal subunit protein uL13.